The sequence spans 470 residues: Pre-mycofactocin glycosyltransferase (470 aa).

A helical transmembrane segment spans residues 315 to 335 (LVISGGALMAWILMSIGTGLG).

It belongs to the glycosyltransferase 2 family.

The protein resides in the cell membrane. Involved in the biosynthesis of the enzyme cofactor mycofactocin (MFT). Acts as a glycosyltransferase that catalyzes the oligoglycosylation of pre-mycofactocin (PMFT), adding up to nine beta-1,4-linked glucose residues. Is required for the in vivo ethanol assimilation in M.smegmatis. The sequence is that of Pre-mycofactocin glycosyltransferase (mftF) from Mycobacterium tuberculosis (strain CDC 1551 / Oshkosh).